Consider the following 629-residue polypeptide: tRNA uridine 5-carboxymethylaminomethyl modification enzyme MnmG (629 aa).

13–18 (GGGHAG) is a binding site for FAD. 273 to 287 (GPRYCPSIEDKVVRF) contributes to the NAD(+) binding site.

It belongs to the MnmG family. Homodimer. Heterotetramer of two MnmE and two MnmG subunits. FAD is required as a cofactor.

The protein localises to the cytoplasm. Its function is as follows. NAD-binding protein involved in the addition of a carboxymethylaminomethyl (cmnm) group at the wobble position (U34) of certain tRNAs, forming tRNA-cmnm(5)s(2)U34. This chain is tRNA uridine 5-carboxymethylaminomethyl modification enzyme MnmG, found in Alkalilimnicola ehrlichii (strain ATCC BAA-1101 / DSM 17681 / MLHE-1).